The following is a 351-amino-acid chain: Amylovoran biosynthesis glycosyltransferase AmsD (351 aa).

It belongs to the glycosyltransferase group 1 family. Glycosyltransferase 4 subfamily.

The protein operates within glycan metabolism; exopolysaccharide biosynthesis. Functionally, involved in the biosynthesis of amylovoran which functions as a virulence factor. May be involved in the formation of galactose alpha-1,6 linkages in amylovoran. The sequence is that of Amylovoran biosynthesis glycosyltransferase AmsD (amsD) from Erwinia amylovora (Fire blight bacteria).